The following is a 299-amino-acid chain: MSSSFHHQPVLPQQVLEALAELPDEGVLLDATVGGGGHSSLLLDVHPGWQLIGLDQDPAARAAAAQQLERFGERVQLVASNFAAYTPDQPVVAVLADLGVSSHQLDVPERGFSFRADGPLDMRMNTEGDGETAAALIDRLEENALADLLFHYGEERLSRRIARRLKTEGPWDDGERGTAALAYAIAGCYPPKQRHGRIHAATRSFQALRIAVNDELGVLETLLNDAPNWLEPGGRIAVISFHSLEDRLVKNRFKADERLRVISRKPLIASEQEAEANPRARSAKLRVAERLSAELEPAQ.

S-adenosyl-L-methionine contacts are provided by residues 36 to 38, Asp55, Phe82, Asp97, and Gln104; that span reads GGH.

Belongs to the methyltransferase superfamily. RsmH family.

It localises to the cytoplasm. The catalysed reaction is cytidine(1402) in 16S rRNA + S-adenosyl-L-methionine = N(4)-methylcytidine(1402) in 16S rRNA + S-adenosyl-L-homocysteine + H(+). Its function is as follows. Specifically methylates the N4 position of cytidine in position 1402 (C1402) of 16S rRNA. The protein is Ribosomal RNA small subunit methyltransferase H of Synechococcus sp. (strain RCC307).